We begin with the raw amino-acid sequence, 197 residues long: MDMQSRIRRLFQASIDTKQQAMDILAPHIEQASLVMVNALLNEGKMLACGNGGSAGDAQHFSSELLNRFERERPSLPAIALTTDSSTLTSIANDYSYNEVFSKQIRALGQPGDVLLAISTSGNSANVIQAIQAAHDREMIVVALTGRDGGGMASLLLPEDVEIRVPSTVTARIQEVHLLAIHCLCDLIDSQLFGSEE.

Residues 36 to 197 (MVNALLNEGK…IDSQLFGSEE (162 aa)) enclose the SIS domain. 51 to 53 (NGG) lines the substrate pocket. H60 and E64 together coordinate Zn(2+). Residues E64, 93–94 (ND), 119–121 (STS), S124, and Q174 each bind substrate. 2 residues coordinate Zn(2+): Q174 and H182.

Belongs to the SIS family. GmhA subfamily. Homotetramer. Zn(2+) serves as cofactor.

Its subcellular location is the cytoplasm. It catalyses the reaction 2 D-sedoheptulose 7-phosphate = D-glycero-alpha-D-manno-heptose 7-phosphate + D-glycero-beta-D-manno-heptose 7-phosphate. The protein operates within carbohydrate biosynthesis; D-glycero-D-manno-heptose 7-phosphate biosynthesis; D-glycero-alpha-D-manno-heptose 7-phosphate and D-glycero-beta-D-manno-heptose 7-phosphate from sedoheptulose 7-phosphate: step 1/1. Catalyzes the isomerization of sedoheptulose 7-phosphate in D-glycero-D-manno-heptose 7-phosphate. The protein is Phosphoheptose isomerase of Pseudomonas putida (strain GB-1).